Reading from the N-terminus, the 154-residue chain is Cathelicidin-2 (154 aa).

An N-terminal signal peptide occupies residues 1 to 17; that stretch reads MLSCWVLLLALLGGVCA. The propeptide occupies 18–122; sequence LPAPLSYPQA…RCRDASSDPV (105 aa). Disulfide bonds link C75–C86 and C97–C114.

It belongs to the cathelicidin family. In terms of tissue distribution, detected in trachea, lung, proventriculus, duodenum, jejunum, ileum, caeca, colon, caecal tonsil, bursa of Fabricius, kidney, ovary, testis, thymus, liver, spleen, bone marrow, skin, uropygial gland, muscle and brain.

It is found in the secreted. Functionally, binds bacterial lipopolysaccharide (LPS). Has potent antimicrobial activity against Gram-positive and Gram-negative bacteria (in vitro). Has hemolytic activity (in vitro). May play a role in the innate immune response. In Gallus gallus (Chicken), this protein is Cathelicidin-2 (CATHL2).